Consider the following 334-residue polypeptide: Coiled-coil domain-containing protein 89 (334 aa).

Residues 75–318 adopt a coiled-coil conformation; sequence EAAQRFQSER…EAYKKHSGDL (244 aa).

It belongs to the CCDC89 family. As to quaternary structure, interacts (via C-terminus) with hey1/bc8 (via Orange domain). In terms of tissue distribution, in adults, expressed at varying levels in different organs including the liver and brain, with highest expression in the testis.

Its subcellular location is the cytoplasm. The protein localises to the nucleus. This is Coiled-coil domain-containing protein 89 from Xenopus laevis (African clawed frog).